We begin with the raw amino-acid sequence, 357 residues long: Peptide chain release factor 1 (357 aa).

Residue glutamine 235 is modified to N5-methylglutamine.

The protein belongs to the prokaryotic/mitochondrial release factor family. Methylated by PrmC. Methylation increases the termination efficiency of RF1.

The protein localises to the cytoplasm. In terms of biological role, peptide chain release factor 1 directs the termination of translation in response to the peptide chain termination codons UAG and UAA. The polypeptide is Peptide chain release factor 1 (Alkaliphilus metalliredigens (strain QYMF)).